A 205-amino-acid polypeptide reads, in one-letter code: V-type ATP synthase subunit E (205 aa).

Belongs to the V-ATPase E subunit family.

In terms of biological role, produces ATP from ADP in the presence of a proton gradient across the membrane. The protein is V-type ATP synthase subunit E of Treponema denticola (strain ATCC 35405 / DSM 14222 / CIP 103919 / JCM 8153 / KCTC 15104).